The sequence spans 490 residues: Betaine aldehyde dehydrogenase (490 aa).

Residues T26, I27, and D93 each contribute to the K(+) site. NAD(+) is bound at residue 150 to 152; sequence GAW. K162 (charge relay system) is an active-site residue. 176–179 contributes to the NAD(+) binding site; it reads KPSE. V180 contributes to the K(+) binding site. 230-233 is a binding site for NAD(+); the sequence is GVAS. L246 is a K(+) binding site. Catalysis depends on E252, which acts as the Proton acceptor. NAD(+) is bound by residues G254, C286, and E387. Residue C286 is the Nucleophile of the active site. Cysteine sulfenic acid (-SOH) is present on C286. The K(+) site is built by K457 and G460. E464 serves as the catalytic Charge relay system.

Belongs to the aldehyde dehydrogenase family. As to quaternary structure, dimer of dimers. Requires K(+) as cofactor.

The enzyme catalyses betaine aldehyde + NAD(+) + H2O = glycine betaine + NADH + 2 H(+). Its pathway is amine and polyamine biosynthesis; betaine biosynthesis via choline pathway; betaine from betaine aldehyde: step 1/1. Functionally, involved in the biosynthesis of the osmoprotectant glycine betaine. Catalyzes the irreversible oxidation of betaine aldehyde to the corresponding acid. This chain is Betaine aldehyde dehydrogenase, found in Escherichia coli O139:H28 (strain E24377A / ETEC).